A 473-amino-acid chain; its full sequence is Pyruvate kinase (473 aa).

Arg32 contributes to the substrate binding site. K(+) contacts are provided by Asn34, Ser36, Asp66, and Thr67. 34 to 37 (NFSH) is an ATP binding site. Positions 73 and 155 each coordinate ATP. Glu221 is a binding site for Mg(2+). Substrate is bound by residues Gly244, Asp245, and Thr277. Asp245 contacts Mg(2+).

It belongs to the pyruvate kinase family. As to quaternary structure, homotetramer. It depends on Mg(2+) as a cofactor. Requires K(+) as cofactor.

The enzyme catalyses pyruvate + ATP = phosphoenolpyruvate + ADP + H(+). It functions in the pathway carbohydrate degradation; glycolysis; pyruvate from D-glyceraldehyde 3-phosphate: step 5/5. The chain is Pyruvate kinase (pyk) from Clostridium acetobutylicum (strain ATCC 824 / DSM 792 / JCM 1419 / IAM 19013 / LMG 5710 / NBRC 13948 / NRRL B-527 / VKM B-1787 / 2291 / W).